The chain runs to 428 residues: Adenylosuccinate synthetase (428 aa).

GTP-binding positions include 12–18 (GDEGKGK) and 40–42 (GHT). Asp-13 acts as the Proton acceptor in catalysis. Residues Asp-13 and Gly-40 each contribute to the Mg(2+) site. IMP is bound by residues 13-16 (DEGK), 38-41 (NAGH), Thr-128, Arg-142, Gln-223, Thr-238, and Arg-302. Catalysis depends on His-41, which acts as the Proton donor. 298–304 (TTTGRPR) lines the substrate pocket. GTP is bound by residues Arg-304, 330–332 (KLD), and 412–414 (SVG).

It belongs to the adenylosuccinate synthetase family. Homodimer. Requires Mg(2+) as cofactor.

Its subcellular location is the cytoplasm. The enzyme catalyses IMP + L-aspartate + GTP = N(6)-(1,2-dicarboxyethyl)-AMP + GDP + phosphate + 2 H(+). The protein operates within purine metabolism; AMP biosynthesis via de novo pathway; AMP from IMP: step 1/2. Functionally, plays an important role in the de novo pathway of purine nucleotide biosynthesis. Catalyzes the first committed step in the biosynthesis of AMP from IMP. The protein is Adenylosuccinate synthetase of Desulforamulus reducens (strain ATCC BAA-1160 / DSM 100696 / MI-1) (Desulfotomaculum reducens).